We begin with the raw amino-acid sequence, 492 residues long: Ketol-acid reductoisomerase (NADP(+)) (492 aa).

Residues 15-208 (AQLGKCRFMA…GGHRAGVLEF (194 aa)) form the KARI N-terminal Rossmann domain. Residues 45–48 (CGAQ), Arg-68, Arg-76, Ser-78, and 108–110 (DKQ) contribute to the NADP(+) site. The active site involves His-132. Gly-158 is a binding site for NADP(+). 2 KARI C-terminal knotted domains span residues 209 to 344 (SFVA…NAPQ) and 345 to 485 (FEGK…MTDM). 4 residues coordinate Mg(2+): Asp-217, Glu-221, Glu-389, and Glu-393. Ser-414 contributes to the substrate binding site.

Belongs to the ketol-acid reductoisomerase family. The cofactor is Mg(2+).

It catalyses the reaction (2R)-2,3-dihydroxy-3-methylbutanoate + NADP(+) = (2S)-2-acetolactate + NADPH + H(+). The enzyme catalyses (2R,3R)-2,3-dihydroxy-3-methylpentanoate + NADP(+) = (S)-2-ethyl-2-hydroxy-3-oxobutanoate + NADPH + H(+). Its pathway is amino-acid biosynthesis; L-isoleucine biosynthesis; L-isoleucine from 2-oxobutanoate: step 2/4. The protein operates within amino-acid biosynthesis; L-valine biosynthesis; L-valine from pyruvate: step 2/4. Functionally, involved in the biosynthesis of branched-chain amino acids (BCAA). Catalyzes an alkyl-migration followed by a ketol-acid reduction of (S)-2-acetolactate (S2AL) to yield (R)-2,3-dihydroxy-isovalerate. In the isomerase reaction, S2AL is rearranged via a Mg-dependent methyl migration to produce 3-hydroxy-3-methyl-2-ketobutyrate (HMKB). In the reductase reaction, this 2-ketoacid undergoes a metal-dependent reduction by NADPH to yield (R)-2,3-dihydroxy-isovalerate. This is Ketol-acid reductoisomerase (NADP(+)) from Yersinia pestis bv. Antiqua (strain Antiqua).